The primary structure comprises 151 residues: Epigen (151 aa).

The first 18 residues, 1 to 18 (MAFGMLIYILLKAMGALS), serve as a signal peptide directing secretion. Residues 19 to 108 (EEAALTASSL…NSYAHNSYER (90 aa)) lie on the Extracellular side of the membrane. Residue Asn39 is glycosylated (N-linked (GlcNAc...) asparagine). The EGF-like domain maps to 54 to 94 (LMQTCLEEHHSYCINGLCAFHSELRKPICKCLAGYNGERCE). Cystine bridges form between Cys58-Cys71, Cys66-Cys82, and Cys84-Cys93. The helical transmembrane segment at 109–129 (YIAVGIGIGILTSGILAIIYC) threads the bilayer. The Cytoplasmic portion of the chain corresponds to 130 to 151 (YVRKRCRKLKSPYKVCMGETAL).

The protein resides in the membrane. Promotes the growth of epithelial cells. The sequence is that of Epigen (EPGN) from Gallus gallus (Chicken).